Here is a 520-residue protein sequence, read N- to C-terminus: Cytochrome P450 315a1, mitochondrial (520 aa).

Cys466 contributes to the heme binding site.

Belongs to the cytochrome P450 family. Heme serves as cofactor. In terms of tissue distribution, complex coexpression pattern of dib (disembodied) and sad (shade) in the early embryo that restricts to the prothoracic gland cells of the developing ring gland during late embryogenesis. In larvae and adult, coexpression is seen in prothoracic gland and follicle cells of the ovary. In adults, coexpression is seen in the follicle cells, sad only is expressed in nurse cells.

The protein resides in the mitochondrion membrane. It catalyses the reaction 2-deoxyecdysone + 2 reduced [adrenodoxin] + O2 + 2 H(+) = ecdysone + 2 oxidized [adrenodoxin] + H2O. The enzyme catalyses 2,22-dideoxyecdysone + 2 reduced [adrenodoxin] + O2 + 2 H(+) = 22-deoxyecdysone + 2 oxidized [adrenodoxin] + H2O. The protein operates within steroid biosynthesis; ecdysteroid biosynthesis. Functionally, required for CNS development: midline glial cells. Involved in the metabolism of insect hormones: responsible for ecdysteroid C2-hydroxylase activity. May be involved in the breakdown of synthetic insecticides. This chain is Cytochrome P450 315a1, mitochondrial, found in Drosophila melanogaster (Fruit fly).